Here is an 89-residue protein sequence, read N- to C-terminus: Large ribosomal subunit protein bL27 (89 aa).

Residues 1-26 are disordered; it reads MAHKKGVGSSRNGRDSESKRLGVKEG. A compositionally biased stretch (basic and acidic residues) spans 12-26; it reads NGRDSESKRLGVKEG.

The protein belongs to the bacterial ribosomal protein bL27 family.

This Desulforamulus reducens (strain ATCC BAA-1160 / DSM 100696 / MI-1) (Desulfotomaculum reducens) protein is Large ribosomal subunit protein bL27.